The sequence spans 142 residues: Hemoglobin subunit alpha (142 aa).

A Globin domain is found at 2 to 142 (VLSAADKGNV…VSTVLTSKYR (141 aa)). S4 carries the post-translational modification Phosphoserine. K8 and K12 each carry N6-succinyllysine. Position 17 is an N6-acetyllysine; alternate (K17). N6-succinyllysine; alternate is present on K17. Y25 is modified (phosphotyrosine). S36 is modified (phosphoserine). K41 bears the N6-succinyllysine mark. Residue S50 is modified to Phosphoserine. H59 serves as a coordination point for O2. H88 is a heme b binding site. S103 is modified (phosphoserine). Phosphothreonine is present on T109. At S125 the chain carries Phosphoserine. Phosphothreonine occurs at positions 135 and 138. Residue S139 is modified to Phosphoserine.

The protein belongs to the globin family. In terms of assembly, heterotetramer of two alpha chains and two beta chains. Red blood cells.

In terms of biological role, involved in oxygen transport from the lung to the various peripheral tissues. Hemopressin acts as an antagonist peptide of the cannabinoid receptor CNR1. Hemopressin-binding efficiently blocks cannabinoid receptor CNR1 and subsequent signaling. This chain is Hemoglobin subunit alpha (HBA), found in Bos gaurus frontalis (Domestic gayal).